The sequence spans 123 residues: Galectin-2 (123 aa).

The 120-residue stretch at 4–123 folds into the Galectin domain; the sequence is KVEIMNMDMK…LRYLSVQGGF (120 aa). A beta-D-galactoside is bound at residue 65–71; sequence WGKEQRD.

Homodimer.

In terms of biological role, this protein binds beta-galactoside. Its physiological function is not yet known. In Sus scrofa (Pig), this protein is Galectin-2 (LGALS2).